The following is a 102-amino-acid chain: Small ribosomal subunit protein uS10 (102 aa).

This sequence belongs to the universal ribosomal protein uS10 family. Part of the 30S ribosomal subunit.

Its function is as follows. Involved in the binding of tRNA to the ribosomes. The protein is Small ribosomal subunit protein uS10 of Methylorubrum populi (strain ATCC BAA-705 / NCIMB 13946 / BJ001) (Methylobacterium populi).